Here is a 350-residue protein sequence, read N- to C-terminus: MPVLHNLVSNEELKARMLAETEPRTTVSFYKYFTIEDPRAFRDALYVALTRLKVFGRVYVAAEGINAQVSVPASLYEEMKATLYGFHPALDKLRMNIALDDDGKSFWVLRLKVRERIVADGITDESFDASDVGAYLKAAEVNAMLDDPEAVFVDMRNHYEYEVGHFDNALEIPADTFRDQLPMAVDMLEQDKDKKIVMYCTGGIRCEKASAWMRHNGYENVYHIEGGIIEYARRAREQGLPVRFKGKNFVFDERMGERISDDVIAHCHQCGEPCDNHVNCLNDGCHLLFIQCPACAVKFNHCCSPLCMEELALTPEEQRARRAGRENGNKIFNKSRGLLSTTMHIPSPKE.

One can recognise a Rhodanese domain in the interval 146–240 (DDPEAVFVDM…YARRAREQGL (95 aa)). Residue cysteine 200 is the Cysteine persulfide intermediate of the active site.

Belongs to the TrhO family.

The catalysed reaction is uridine(34) in tRNA + AH2 + O2 = 5-hydroxyuridine(34) in tRNA + A + H2O. Functionally, catalyzes oxygen-dependent 5-hydroxyuridine (ho5U) modification at position 34 in tRNAs. This Erwinia tasmaniensis (strain DSM 17950 / CFBP 7177 / CIP 109463 / NCPPB 4357 / Et1/99) protein is tRNA uridine(34) hydroxylase.